The primary structure comprises 61 residues: Phospholipase A2 (61 aa).

3 residues coordinate Ca(2+): Tyr27, Gly29, and Gly31. A disulfide bond links Cys28 and Cys35. Residue His38 is part of the active site. Ca(2+) is bound at residue Asp39. An intrachain disulfide couples Cys41 to Cys59. Residue Asp60 is part of the active site.

The protein belongs to the phospholipase A2 family. Group II subfamily. D49 sub-subfamily. Homodimer. Ca(2+) serves as cofactor. In terms of tissue distribution, expressed by the venom gland.

Its subcellular location is the secreted. The catalysed reaction is a 1,2-diacyl-sn-glycero-3-phosphocholine + H2O = a 1-acyl-sn-glycero-3-phosphocholine + a fatty acid + H(+). In terms of biological role, snake venom phospholipase A2 (PLA2) that displays edema-inducing activities. PLA2 catalyzes the calcium-dependent hydrolysis of the 2-acyl groups in 3-sn-phosphoglycerides. The sequence is that of Phospholipase A2 from Crotalus atrox (Western diamondback rattlesnake).